Consider the following 216-residue polypeptide: Uracil phosphoribosyltransferase (216 aa).

5-phospho-alpha-D-ribose 1-diphosphate-binding positions include Arg-84, Arg-109, and Asp-137–Ser-145. Residues Ile-202 and Gly-207–Ala-209 each bind uracil. Asp-208 lines the 5-phospho-alpha-D-ribose 1-diphosphate pocket.

This sequence belongs to the UPRTase family. It depends on Mg(2+) as a cofactor.

The catalysed reaction is UMP + diphosphate = 5-phospho-alpha-D-ribose 1-diphosphate + uracil. It functions in the pathway pyrimidine metabolism; UMP biosynthesis via salvage pathway; UMP from uracil: step 1/1. Its activity is regulated as follows. Allosterically activated by GTP. In terms of biological role, catalyzes the conversion of uracil and 5-phospho-alpha-D-ribose 1-diphosphate (PRPP) to UMP and diphosphate. The chain is Uracil phosphoribosyltransferase from Nostoc sp. (strain PCC 7120 / SAG 25.82 / UTEX 2576).